The following is a 701-amino-acid chain: MARDLKFTRNIGIAAHIDAGKTTTTERILYYAGVNHKIGEVHEGGATMDWMAQEQERGITITSAATTVGWKYRDNQYHVNIIDTPGHVDFTVEVNRSLRVLDGLVFLFSAVDGVEPQSETNWRLANNYKVARLGFVNKMDRSGADFLNVCKQVKEMLGSNAVPLQLPIGSEDNFQGVVDLVNNRAIVWNEADKGMTFTEVPIPADMVDETLEYREKLLEAVADYDETLMEKFFEDPNSISETEILTALRKAVLDMKIVPMLCGSSFKNKGVQTMLDYVMELLPSPLDKDDLVGINPDTDKEVVRKPVETDPFCALAFKIATDPFVGRLCFVRSYSGLLESGSYVYNTRSGNKERISRIFQMHANKQNQIDRLHCGDIGAVVGFKDIKTGDTLCDEKNKIILESMVFPEPVIGYAIEPKTQADVDKMGVAIAKLVEEDPTLHVHTDQETGQTILRGMGELHLEIIIDRMRREFKVEINQGAPQVAYKESLTKSTEHREVFKKQSGGRGKFADIVFELSPREDDKLGLEFENKIVGGVIPKEFIPSIQKGFEEAMKNGVIAGFPVESMKVRLNHGSFHDVDSDALSFELAARQGFKEAAKNAGAKIMEPIMSVEVVTPEEYTGPVTGDLNRRRGMMKGMDSKMGAQVIKADVPLSELFGYVTDLRTISSGRATASLTFSHYEFVPANLAETIVAKVKGTAVSK.

In terms of domain architecture, tr-type G spans 6–286 (KFTRNIGIAA…YVMELLPSPL (281 aa)). GTP contacts are provided by residues 15 to 22 (AHIDAGKT), 83 to 87 (DTPGH), and 137 to 140 (NKMD).

It belongs to the TRAFAC class translation factor GTPase superfamily. Classic translation factor GTPase family. EF-G/EF-2 subfamily.

The protein localises to the cytoplasm. Functionally, catalyzes the GTP-dependent ribosomal translocation step during translation elongation. During this step, the ribosome changes from the pre-translocational (PRE) to the post-translocational (POST) state as the newly formed A-site-bound peptidyl-tRNA and P-site-bound deacylated tRNA move to the P and E sites, respectively. Catalyzes the coordinated movement of the two tRNA molecules, the mRNA and conformational changes in the ribosome. The sequence is that of Elongation factor G from Cytophaga hutchinsonii (strain ATCC 33406 / DSM 1761 / CIP 103989 / NBRC 15051 / NCIMB 9469 / D465).